A 95-amino-acid polypeptide reads, in one-letter code: Small ribosomal subunit protein uS19 (95 aa).

Belongs to the universal ribosomal protein uS19 family.

Functionally, protein S19 forms a complex with S13 that binds strongly to the 16S ribosomal RNA. This is Small ribosomal subunit protein uS19 from Thermosipho melanesiensis (strain DSM 12029 / CIP 104789 / BI429).